Here is a 213-residue protein sequence, read N- to C-terminus: Protein-L-isoaspartate O-methyltransferase (213 aa).

Serine 61 is an active-site residue.

The protein belongs to the methyltransferase superfamily. L-isoaspartyl/D-aspartyl protein methyltransferase family.

The protein resides in the cytoplasm. The catalysed reaction is [protein]-L-isoaspartate + S-adenosyl-L-methionine = [protein]-L-isoaspartate alpha-methyl ester + S-adenosyl-L-homocysteine. In terms of biological role, catalyzes the methyl esterification of L-isoaspartyl residues in peptides and proteins that result from spontaneous decomposition of normal L-aspartyl and L-asparaginyl residues. It plays a role in the repair and/or degradation of damaged proteins. The protein is Protein-L-isoaspartate O-methyltransferase of Petrotoga mobilis (strain DSM 10674 / SJ95).